A 457-amino-acid polypeptide reads, in one-letter code: tRNA-2-methylthio-N(6)-dimethylallyladenosine synthase (457 aa).

The MTTase N-terminal domain occupies 4–119 (RNFHIITFGC…APDAIERLYA (116 aa)). 6 residues coordinate [4Fe-4S] cluster: Cys13, Cys48, Cys82, Cys164, Cys168, and Cys171. The Radical SAM core domain occupies 150-385 (NTLALMAYVN…QATQLEHSTS (236 aa)). The TRAM domain maps to 388-456 (KSRVGVETTV…KHSLVAEPLI (69 aa)).

The protein belongs to the methylthiotransferase family. MiaB subfamily. In terms of assembly, monomer. The cofactor is [4Fe-4S] cluster.

The protein localises to the cytoplasm. It catalyses the reaction N(6)-dimethylallyladenosine(37) in tRNA + (sulfur carrier)-SH + AH2 + 2 S-adenosyl-L-methionine = 2-methylsulfanyl-N(6)-dimethylallyladenosine(37) in tRNA + (sulfur carrier)-H + 5'-deoxyadenosine + L-methionine + A + S-adenosyl-L-homocysteine + 2 H(+). Catalyzes the methylthiolation of N6-(dimethylallyl)adenosine (i(6)A), leading to the formation of 2-methylthio-N6-(dimethylallyl)adenosine (ms(2)i(6)A) at position 37 in tRNAs that read codons beginning with uridine. The chain is tRNA-2-methylthio-N(6)-dimethylallyladenosine synthase from Lawsonia intracellularis (strain PHE/MN1-00).